We begin with the raw amino-acid sequence, 501 residues long: NADH-quinone oxidoreductase subunit N (501 aa).

The next 14 membrane-spanning stretches (helical) occupy residues 4-24 (HLPI…RLLV), 34-54 (FVLA…AETL), 80-100 (LAGG…VYAG), 112-132 (GSFY…CATG), 134-154 (LFNL…LIAF), 167-187 (LIIG…LYAM), 207-227 (PVVI…MALF), 241-261 (PAPV…YALY), 278-298 (LQVL…MAIA), 314-334 (VGYI…GALL), 335-355 (HVLS…GVSW), 376-396 (MGAF…LGFF), 409-429 (GAWV…VYFF), and 463-483 (PASM…LGLF).

This sequence belongs to the complex I subunit 2 family. In terms of assembly, NDH-1 is composed of 14 different subunits. Subunits NuoA, H, J, K, L, M, N constitute the membrane sector of the complex.

Its subcellular location is the cell membrane. The catalysed reaction is a quinone + NADH + 5 H(+)(in) = a quinol + NAD(+) + 4 H(+)(out). Functionally, NDH-1 shuttles electrons from NADH, via FMN and iron-sulfur (Fe-S) centers, to quinones in the respiratory chain. The immediate electron acceptor for the enzyme in this species is believed to be a menaquinone. Couples the redox reaction to proton translocation (for every two electrons transferred, four hydrogen ions are translocated across the cytoplasmic membrane), and thus conserves the redox energy in a proton gradient. This chain is NADH-quinone oxidoreductase subunit N, found in Desulforudis audaxviator (strain MP104C).